The following is a 317-amino-acid chain: Actin-related protein 2/3 complex subunit 2 (317 aa).

Belongs to the ARPC2 family. In terms of assembly, component of the Arp2/3 complex composed of arp2, act2, arc1/p41-ARC, arc2/p34-ARC, arc3/p21-ARC, arc4/p20-ARC and arc5/p16-ARC.

Its subcellular location is the cytoplasm. It localises to the cytoskeleton. It is found in the actin patch. Its function is as follows. Functions as actin-binding component of the Arp2/3 complex which is involved in regulation of actin polymerization and together with an activating nucleation-promoting factor (NPF) mediates the formation of branched actin networks. Seems to contact the mother actin filament. This chain is Actin-related protein 2/3 complex subunit 2 (arc2), found in Schizosaccharomyces pombe (strain 972 / ATCC 24843) (Fission yeast).